We begin with the raw amino-acid sequence, 658 residues long: Threonine--tRNA ligase (658 aa).

A TGS domain is found at 1–64 (MSNTVSLQFP…GASGKVEIIT (64 aa)). The catalytic stretch occupies residues 246–548 (DHRRLGREMD…LIENFAGHMP (303 aa)). Residues C343, H394, and H525 each coordinate Zn(2+).

Belongs to the class-II aminoacyl-tRNA synthetase family. In terms of assembly, homodimer. The cofactor is Zn(2+).

It is found in the cytoplasm. The catalysed reaction is tRNA(Thr) + L-threonine + ATP = L-threonyl-tRNA(Thr) + AMP + diphosphate + H(+). Its function is as follows. Catalyzes the attachment of threonine to tRNA(Thr) in a two-step reaction: L-threonine is first activated by ATP to form Thr-AMP and then transferred to the acceptor end of tRNA(Thr). Also edits incorrectly charged L-seryl-tRNA(Thr). This is Threonine--tRNA ligase from Brucella melitensis biotype 1 (strain ATCC 23456 / CCUG 17765 / NCTC 10094 / 16M).